The following is a 142-amino-acid chain: Large ribosomal subunit protein uL13 (142 aa).

Belongs to the universal ribosomal protein uL13 family. As to quaternary structure, part of the 50S ribosomal subunit.

In terms of biological role, this protein is one of the early assembly proteins of the 50S ribosomal subunit, although it is not seen to bind rRNA by itself. It is important during the early stages of 50S assembly. In Pseudoalteromonas translucida (strain TAC 125), this protein is Large ribosomal subunit protein uL13.